Here is a 310-residue protein sequence, read N- to C-terminus: N-acetyl-gamma-glutamyl-phosphate reductase (310 aa).

Residue cysteine 117 is part of the active site.

It belongs to the NAGSA dehydrogenase family. Type 2 subfamily.

The protein localises to the cytoplasm. It catalyses the reaction N-acetyl-L-glutamate 5-semialdehyde + phosphate + NADP(+) = N-acetyl-L-glutamyl 5-phosphate + NADPH + H(+). It functions in the pathway amino-acid biosynthesis; L-arginine biosynthesis; N(2)-acetyl-L-ornithine from L-glutamate: step 3/4. Its function is as follows. Catalyzes the NADPH-dependent reduction of N-acetyl-5-glutamyl phosphate to yield N-acetyl-L-glutamate 5-semialdehyde. The chain is N-acetyl-gamma-glutamyl-phosphate reductase from Rhizobium etli (strain ATCC 51251 / DSM 11541 / JCM 21823 / NBRC 15573 / CFN 42).